The following is a 404-amino-acid chain: Serine/threonine-protein phosphatase 2A regulatory subunit rsa-1 (404 aa).

Part of a complex consisting of a common heterodimeric core enzyme, composed of catalytic subunit let-92 and constant regulatory subunit paa-1, that associates with a variety of regulatory subunits which confer distinct properties to the holoenzyme. Interacts with rsa-2, spd-5 and tpxl-1.

It is found in the cytoplasm. It localises to the cytoskeleton. Its subcellular location is the microtubule organizing center. The protein localises to the centrosome. In terms of biological role, regulatory subunit of phosphatase let-92 which recruits let-92/paa-1 complex to the centrosomes, thereby regulating microtubule outgrowth from centrosomes and mitotic spindle assembly ensuring the stability of kinetochore microtubules. This chain is Serine/threonine-protein phosphatase 2A regulatory subunit rsa-1, found in Caenorhabditis elegans.